A 112-amino-acid chain; its full sequence is Ribonuclease P protein component (112 aa).

The protein belongs to the RnpA family. As to quaternary structure, consists of a catalytic RNA component (M1 or rnpB) and a protein subunit.

The enzyme catalyses Endonucleolytic cleavage of RNA, removing 5'-extranucleotides from tRNA precursor.. In terms of biological role, RNaseP catalyzes the removal of the 5'-leader sequence from pre-tRNA to produce the mature 5'-terminus. It can also cleave other RNA substrates such as 4.5S RNA. The protein component plays an auxiliary but essential role in vivo by binding to the 5'-leader sequence and broadening the substrate specificity of the ribozyme. This Mycoplasmopsis synoviae (strain 53) (Mycoplasma synoviae) protein is Ribonuclease P protein component.